Here is a 34-residue protein sequence, read N- to C-terminus: Omega/M-ectatotoxin-Et1a subunit B (34 aa).

Cys-10 and Cys-32 are oxidised to a cystine.

The protein belongs to the ectatomin family. Ectatomin-Et subfamily. In terms of assembly, heterodimer of an A and a B chain; disulfide-linked. In terms of tissue distribution, expressed by the venom gland.

It is found in the secreted. It localises to the target cell membrane. In terms of biological role, algogenic for animals, human and insects. At high concentrations (0.5-1 uM), it acts as a pore-forming protein that forms nonselective cation channels both in cell and artificial membranes. It is weakly selective for cation over anions channel conductance is identical in both directions. At lower concentrations (1-10 nM), this heterodimer inhibits cardiac L-type calcium currents in isolated rat cardiac ventricular myocytes. This is Omega/M-ectatotoxin-Et1a subunit B from Ectatomma tuberculatum (Selva ant).